The following is a 965-amino-acid chain: Forespore membrane adapter protein MUG56 (965 aa).

The segment at 70–175 (SFLMHKSTDE…VQNSNSTSTS (106 aa)) is disordered. Polar residues predominate over residues 82-101 (DTPSNLDSPSTQNVGSTNNT). Over residues 102–114 (RASQSLLRRSSSF) the composition is skewed to low complexity. The segment covering 124 to 158 (THASTDNNPFSESSTLQPQTAERTSQQAVRSAITE) has biased composition (polar residues). A compositionally biased stretch (low complexity) spans 159–175 (TTNPSVSVQNSNSTSTS). PH domains follow at residues 562–737 (PTPV…EVAS) and 800–961 (VIRM…KEIN).

It belongs to the SPO71 family.

The protein resides in the cytoplasm. The protein localises to the nucleus. It localises to the prospore membrane. Its function is as follows. May recruit a lipid transfer protein to the forespore membrane during sporulation, thereby aiding forespore membrane formation. Required for meiosis. The protein is Forespore membrane adapter protein MUG56 of Schizosaccharomyces pombe (strain 972 / ATCC 24843) (Fission yeast).